A 123-amino-acid polypeptide reads, in one-letter code: Cysteine-rich DPF motif domain-containing protein 1 (123 aa).

A disordered region spans residues 102–123 (RQDLEKRKAPSKRTPSQPGSRT). Residues 114-123 (RTPSQPGSRT) are compositionally biased toward polar residues.

It belongs to the CDPF1 family.

The polypeptide is Cysteine-rich DPF motif domain-containing protein 1 (CDPF1) (Homo sapiens (Human)).